A 150-amino-acid polypeptide reads, in one-letter code: Large ribosomal subunit protein uL11 (150 aa).

The protein belongs to the universal ribosomal protein uL11 family. Part of the ribosomal stalk of the 50S ribosomal subunit. Interacts with L10 and the large rRNA to form the base of the stalk. L10 forms an elongated spine to which L12 dimers bind in a sequential fashion forming a multimeric L10(L12)X complex. Post-translationally, one or more lysine residues are methylated.

Its function is as follows. Forms part of the ribosomal stalk which helps the ribosome interact with GTP-bound translation factors. The sequence is that of Large ribosomal subunit protein uL11 from Ureaplasma urealyticum serovar 10 (strain ATCC 33699 / Western).